An 872-amino-acid chain; its full sequence is Rho guanine nucleotide exchange factor scd1 (872 aa).

Positions 1–29 (MAYFQDRKTSSRSLPSYINHSTQNLVGPR) are disordered. A compositionally biased stretch (polar residues) spans 11–25 (SRSLPSYINHSTQNL). The Calponin-homology (CH) domain maps to 82 to 198 (DSIHREALNS…TIELLLKKYE (117 aa)). A DH domain is found at 228–402 (SGRRVTAELY…VRVANQVNET (175 aa)). The region spanning 426–547 (SLQYFGQLLV…WMSVLNRLLW (122 aa)) is the PH domain. 2 disordered regions span residues 553–667 (SPKD…STAS) and 743–765 (MKSD…STST). Residues 560 to 584 (AASTPANPVYNRSSSQTSKGYNSSD) are compositionally biased toward polar residues. Ser-583 carries the post-translational modification Phosphoserine. The segment covering 599–616 (SPTSISSPSSKSSPFTKT) has biased composition (low complexity). Positions 617–633 (TSKDTKSATTTDERPSD) are enriched in basic and acidic residues. Composition is skewed to low complexity over residues 645-667 (TSSL…STAS) and 748-765 (SLLP…STST). One can recognise a PB1 domain in the interval 772–859 (TTNVKIRLRL…FELMDPVHNK (88 aa)).

Scd1, scd2, cdc42, and ras1, in its GTP-bound state, act cooperatively to form a protein complex. Interacts with moe1 and cdc42.

Its subcellular location is the nucleus. It is found in the cytoplasm. Its function is as follows. Required for mating and morphogenesis. May contain a cryptic binding site for cdc42 that is enhanced by binding Ras. Interacts directly with scd2. Promotes the exchange of cdc42-bound GDP by GTP. Involved in septation and stimulates the elongation of conjugation tubes. This is Rho guanine nucleotide exchange factor scd1 (scd1) from Schizosaccharomyces pombe (strain 972 / ATCC 24843) (Fission yeast).